The following is a 188-amino-acid chain: Putative manganese efflux pump MntP (188 aa).

6 consecutive transmembrane segments (helical) span residues 2–22 (IMGN…AFAV), 39–59 (LITG…GFLL), 67–87 (ITAI…LNMI), 107–127 (IILS…FAFL), 129–149 (VDIV…SFLG), and 166–186 (LAGG…HLGF).

Belongs to the MntP (TC 9.B.29) family.

The protein resides in the cell membrane. Functionally, probably functions as a manganese efflux pump. In Desulfitobacterium hafniense (strain Y51), this protein is Putative manganese efflux pump MntP.